The primary structure comprises 513 residues: ATP synthase subunit alpha (513 aa).

169–176 (GDRQTGKT) serves as a coordination point for ATP.

The protein belongs to the ATPase alpha/beta chains family. F-type ATPases have 2 components, CF(1) - the catalytic core - and CF(0) - the membrane proton channel. CF(1) has five subunits: alpha(3), beta(3), gamma(1), delta(1), epsilon(1). CF(0) has three main subunits: a(1), b(2) and c(9-12). The alpha and beta chains form an alternating ring which encloses part of the gamma chain. CF(1) is attached to CF(0) by a central stalk formed by the gamma and epsilon chains, while a peripheral stalk is formed by the delta and b chains.

It localises to the cell inner membrane. It carries out the reaction ATP + H2O + 4 H(+)(in) = ADP + phosphate + 5 H(+)(out). Produces ATP from ADP in the presence of a proton gradient across the membrane. The alpha chain is a regulatory subunit. The protein is ATP synthase subunit alpha of Shewanella baltica (strain OS223).